The chain runs to 512 residues: Histidine ammonia-lyase (512 aa).

A cross-link (5-imidazolinone (Ala-Gly)) is located at residues 146–148 (ASG). 2,3-didehydroalanine (Ser) is present on S147.

Belongs to the PAL/histidase family. Post-translationally, contains an active site 4-methylidene-imidazol-5-one (MIO), which is formed autocatalytically by cyclization and dehydration of residues Ala-Ser-Gly.

Its subcellular location is the cytoplasm. It carries out the reaction L-histidine = trans-urocanate + NH4(+). It functions in the pathway amino-acid degradation; L-histidine degradation into L-glutamate; N-formimidoyl-L-glutamate from L-histidine: step 1/3. This Paracidovorax citrulli (strain AAC00-1) (Acidovorax citrulli) protein is Histidine ammonia-lyase.